Here is a 260-residue protein sequence, read N- to C-terminus: Flavin-dependent thymidylate synthase (260 aa).

The 202-residue stretch at 2-203 folds into the ThyX domain; that stretch reads ISVKLVSYTN…PRLFKYTGPN (202 aa). FAD-binding positions include Ser56, 80 to 82, and Gln88; that span reads RHR. Residues 77–80, 88–92, and Arg142 contribute to the dUMP site; these read QLVR and QMSHR. The ThyX motif signature appears at 80–90; the sequence is RHRIASYTQMS. FAD contacts are provided by residues 158-160 and Asn164; that span reads NAR. Arg169 provides a ligand contact to dUMP. Arg169 acts as the Involved in ionization of N3 of dUMP, leading to its activation in catalysis.

The protein belongs to the thymidylate synthase ThyX family. As to quaternary structure, homotetramer. FAD serves as cofactor.

The enzyme catalyses dUMP + (6R)-5,10-methylene-5,6,7,8-tetrahydrofolate + NADPH + H(+) = dTMP + (6S)-5,6,7,8-tetrahydrofolate + NADP(+). Its pathway is pyrimidine metabolism; dTTP biosynthesis. Functionally, catalyzes the reductive methylation of 2'-deoxyuridine-5'-monophosphate (dUMP) to 2'-deoxythymidine-5'-monophosphate (dTMP) while utilizing 5,10-methylenetetrahydrofolate (mTHF) as the methyl donor, and NADPH and FADH(2) as the reductant. This Saccharolobus solfataricus (strain ATCC 35092 / DSM 1617 / JCM 11322 / P2) (Sulfolobus solfataricus) protein is Flavin-dependent thymidylate synthase.